Consider the following 283-residue polypeptide: tRNA pseudouridine synthase B (283 aa).

Aspartate 38 (nucleophile) is an active-site residue.

This sequence belongs to the pseudouridine synthase TruB family. Type 1 subfamily.

It carries out the reaction uridine(55) in tRNA = pseudouridine(55) in tRNA. Its function is as follows. Responsible for synthesis of pseudouridine from uracil-55 in the psi GC loop of transfer RNAs. The chain is tRNA pseudouridine synthase B from Onion yellows phytoplasma (strain OY-M).